The sequence spans 404 residues: MQDILTVILAGGMGSRLSPLTDDRAKPAVPFGGKYRIIDFTLTNCLHSGLRKILVLTQYKSHSLQKHLRDGWSIFNPELGEYITSVPPQMRKGGKWYEGTADAIYHNLWLLERSEAKYVMVLSGDHIYRMDYAPMLEEHIANNAALTVACMDVNCKEAKAFGVMGIDEHHRVHSFVEKPQNPPHLPNDPERSLVSMGIYIFSMEVLQQALIEDADNDASSHDFGKDIIPKLIDTGSVFAYKFCGSKGRVDKDCYWRDVGTIDSFYQANMDLLEPIPPMNLYQKDWGIRTYEPQYPPARTVSSGSGNEGIFINSMISNGVINSGGSVQHSIVSSNVRINDSATIVDSIIFDDVEIGEGCQLVNCIIDKHVKVPPYTQIGLNRLEDAQRFKISENGIVVVPESYQF.

Residues Y97, G162, 177–178 (EK), and S195 each bind alpha-D-glucose 1-phosphate.

The protein belongs to the bacterial/plant glucose-1-phosphate adenylyltransferase family. In terms of assembly, homotetramer.

It catalyses the reaction alpha-D-glucose 1-phosphate + ATP + H(+) = ADP-alpha-D-glucose + diphosphate. The protein operates within glycan biosynthesis; glycogen biosynthesis. Its function is as follows. Involved in the biosynthesis of ADP-glucose, a building block required for the elongation reactions to produce glycogen. Catalyzes the reaction between ATP and alpha-D-glucose 1-phosphate (G1P) to produce pyrophosphate and ADP-Glc. This chain is Glucose-1-phosphate adenylyltransferase 2, found in Vibrio vulnificus (strain YJ016).